The chain runs to 128 residues: Aspartate 1-decarboxylase (128 aa).

Serine 25 serves as the catalytic Schiff-base intermediate with substrate; via pyruvic acid. A Pyruvic acid (Ser) modification is found at serine 25. Residue threonine 57 participates in substrate binding. Tyrosine 58 serves as the catalytic Proton donor. 73–75 (GSA) is a substrate binding site.

It belongs to the PanD family. In terms of assembly, heterooctamer of four alpha and four beta subunits. The cofactor is pyruvate. Post-translationally, is synthesized initially as an inactive proenzyme, which is activated by self-cleavage at a specific serine bond to produce a beta-subunit with a hydroxyl group at its C-terminus and an alpha-subunit with a pyruvoyl group at its N-terminus.

It is found in the cytoplasm. It catalyses the reaction L-aspartate + H(+) = beta-alanine + CO2. It functions in the pathway cofactor biosynthesis; (R)-pantothenate biosynthesis; beta-alanine from L-aspartate: step 1/1. Catalyzes the pyruvoyl-dependent decarboxylation of aspartate to produce beta-alanine. This chain is Aspartate 1-decarboxylase, found in Burkholderia pseudomallei (strain 668).